Consider the following 404-residue polypeptide: DNA polymerase processivity factor BMRF1 (404 aa).

A homodimerization; DNA binding and DNA polymerase processivity region spans residues 1 to 300 (METTQTLRFK…SVILFNHASE (300 aa)). The interval 301–404 (EAAASTASEP…KVKQAFNPLI (104 aa)) is transcriptional activation. Positions 302–404 (AAASTASEPE…KVKQAFNPLI (103 aa)) are disordered. Residues 335–344 (SPSPPPPPRT) are compositionally biased toward pro residues. Phosphoserine is present on Ser-337. Residue Thr-344 is modified to Phosphothreonine. Ser-349 bears the Phosphoserine mark. Thr-355 bears the Phosphothreonine mark.

This sequence belongs to the herpesviridae DNA polymerase accessory subunit family. Homodimer. Two dimers can adopt a tetrameric ring-like structure. Forms a complex with the DNA-binding protein BALF2, the DNA polymerase subunit BALF5, and the alkaline exonuclease BGLF5. Interacts (via N-terminus) with BZLF1 (via bZIP domain); this interaction may inhibit BZLF1-induced transcription of the BMRF1 promoter. Interacts (via C-terminus) with host NuRD complex; this interaction is important for transcriptional activation of EBV promoters and inhibition of the ubiquitination step of DDR signaling. Phosphorylated by the viral BGLF4 kinase.

Its subcellular location is the virion tegument. The protein resides in the host nucleus. Acts as a DNA polymerase processivity factor; a transcriptional activator for several EBV promoters and inhibits the host DNA damage response (DDR) to double-stranded DNA breaks. Plays an essential role in the viral lytic DNA replication by acting as a polymerase accessory subunit. Stimulates the viral DNA polymerase activity and appears to function with it as a holoenzyme. Increases the processivity of the viral polymerase, probably by acting as a sliding clamp that prevents dissociation of the polymerase from the active template. In addition, BMRF1 transcriptionally activates the oriLyt early BHLF1 promoter. Promotes G1/S cell cycle arrest through p53 induction. The chain is DNA polymerase processivity factor BMRF1 from Epstein-Barr virus (strain AG876) (HHV-4).